We begin with the raw amino-acid sequence, 227 residues long: DNA repair protein RecO (227 aa).

It belongs to the RecO family.

Involved in DNA repair and RecF pathway recombination. In Pseudomonas entomophila (strain L48), this protein is DNA repair protein RecO.